The chain runs to 298 residues: 4-hydroxybenzoate octaprenyltransferase (298 aa).

The next 7 membrane-spanning stretches (helical) occupy residues 30–50 (IGTW…AEGI), 54–74 (GTLL…CVVN), 105–125 (VLFA…NLPT), 148–168 (FPQV…FMAI), 218–238 (DRLM…WVGL), 240–260 (LALG…FVFQ), and 275–295 (AFLN…LSLW).

It belongs to the UbiA prenyltransferase family. Mg(2+) is required as a cofactor.

Its subcellular location is the cell inner membrane. The catalysed reaction is all-trans-octaprenyl diphosphate + 4-hydroxybenzoate = 4-hydroxy-3-(all-trans-octaprenyl)benzoate + diphosphate. It functions in the pathway cofactor biosynthesis; ubiquinone biosynthesis. Functionally, catalyzes the prenylation of para-hydroxybenzoate (PHB) with an all-trans polyprenyl group. Mediates the second step in the final reaction sequence of ubiquinone-8 (UQ-8) biosynthesis, which is the condensation of the polyisoprenoid side chain with PHB, generating the first membrane-bound Q intermediate 3-octaprenyl-4-hydroxybenzoate. This Chromohalobacter salexigens (strain ATCC BAA-138 / DSM 3043 / CIP 106854 / NCIMB 13768 / 1H11) protein is 4-hydroxybenzoate octaprenyltransferase.